The following is an 87-amino-acid chain: Precursor of CEP8 (87 aa).

The N-terminal stretch at 1 to 29 (MAKALFFNFCISLLIIAILVSHEIIPTEA) is a signal peptide. Positions 30 to 72 (RHLRTHRKSIKNSTLTVHEGAGGLRTGGGSVKTDISKEEHGVD) are excised as a propeptide. A glycan (N-linked (GlcNAc...) asparagine) is linked at asparagine 41. Residues 41-87 (NSTLTVHEGAGGLRTGGGSVKTDISKEEHGVDEFRPTTPGNSPGIGH) are disordered. Residues 49–59 (GAGGLRTGGGS) show a composition bias toward gly residues. Positions 63 to 75 (DISKEEHGVDEFR) are enriched in basic and acidic residues. A hydroxyproline mark is found at proline 76, proline 79, and proline 83.

The protein belongs to the C-terminally encoded plant signaling peptide (CEP) family. In terms of assembly, interacts with CEP receptors (e.g. CEPR1 and CEPR2). The mature small signaling peptide is generated by proteolytic processing of the longer precursor. Expressed in lateral root primordia and in lateral roots excluding the meristem region. Also present in the aerial tissues, such as leaf petioles and the shoot apex region.

The protein resides in the secreted. Its subcellular location is the extracellular space. It is found in the apoplast. Extracellular signaling peptide that may regulate primary root growth rate and systemic nitrogen (N)-demand signaling. Mediates up-regulation of genes involved in N uptake and assimilation pathways. This Arabidopsis thaliana (Mouse-ear cress) protein is Precursor of CEP8.